The sequence spans 3387 residues: Genome polyprotein (3387 aa).

The Cytoplasmic segment spans residues 1–100 (MNQRKKVVRP…LNILNGRKRS (100 aa)). The tract at residues 36–71 (LFSGKGPLRMVLAFITFLRVLSIPPTAGILKRWGQL) is hydrophobic; homodimerization of capsid protein C. A propeptide spans 100–113 (STMTLLCLIPTAMA) (ER anchor for the capsid protein C, removed in mature form by serine protease NS3). Residues 101–117 (TMTLLCLIPTAMAFHLS) traverse the membrane as a helical segment. The Extracellular portion of the chain corresponds to 118-237 (TRDGEPLMIV…GAWKHAQRVE (120 aa)). N-linked (GlcNAc...) asparagine; by host glycosylation is present at Asn-182. A helical transmembrane segment spans residues 238-258 (SWILRNPGFALLAGFMAYMIG). Residues 259 to 265 (QTGIQRT) lie on the Cytoplasmic side of the membrane. The chain crosses the membrane as a helical span at residues 266 to 279 (VFFVLMMLVAPSYG). Residues 280-723 (MRCVGVGNRD…AVHQVFGSVY (444 aa)) are Extracellular-facing. Disulfide bonds link Cys-282/Cys-309, Cys-339/Cys-400, Cys-353/Cys-384, Cys-371/Cys-395, Cys-464/Cys-564, and Cys-581/Cys-612. Asn-346 is a glycosylation site (N-linked (GlcNAc...) asparagine; by host). The interval 377-390 (DRGWGNGCGLFGKG) is fusion peptide. A helical membrane pass occupies residues 724–746 (TTMFGGVSWMVRILIGFLVLWIG). The Cytoplasmic portion of the chain corresponds to 747 to 750 (TNSR). The chain crosses the membrane as a helical span at residues 751-771 (NTSMAMTCIAVGGITLFLGFT). Residues 772-1194 (VHADTGCAVS…MLGDTMSGRM (423 aa)) lie on the Extracellular side of the membrane. 6 cysteine pairs are disulfide-bonded: Cys-778–Cys-789, Cys-829–Cys-917, Cys-953–Cys-997, Cys-1054–Cys-1103, Cys-1065–Cys-1087, and Cys-1086–Cys-1090. Residues Asn-904 and Asn-981 are each glycosylated (N-linked (GlcNAc...) asparagine; by host). The helical transmembrane segment at 1195-1218 (GGQIHLAIMAVFKMSPGYVLGIFL) threads the bilayer. Residues 1219 to 1224 (RKLTSR) are Lumenal-facing. A helical membrane pass occupies residues 1225–1243 (ETALMVIGMAMTTVLSIPH). Over 1244 to 1267 (DLMEFIDGISLGLILLKMVTHFDN) the chain is Cytoplasmic. Residues 1268–1288 (TQVGTLALSLTFIRSTMPLVM) traverse the membrane as a helical segment. Ala-1289 is a topological domain (lumenal). A helical membrane pass occupies residues 1290 to 1308 (WRTIMAVLFVVTLIPLCRT). At 1309–1316 (SCLQKQSH) the chain is on the lumenal side. Residues 1317–1337 (WVEITALILGAQALPVYLMTL) traverse the membrane as a helical segment. The Cytoplasmic portion of the chain corresponds to 1338–1345 (MKGASKRS). Residues 1346–1366 (WPLNEGIMAVGLVSLLGSALL) traverse the membrane as a helical segment. The Lumenal segment spans residues 1367–1369 (KND). The helical transmembrane segment at 1370-1390 (VPLAGPMVAGGLLLAAYVMSG) threads the bilayer. Over 1391 to 1437 (SSADLSLEKAANVQWDEMADITGSSPIIEVKQDEDGSFSIRDIEETN) the chain is Cytoplasmic. Residues 1397-1436 (LEKAANVQWDEMADITGSSPIIEVKQDEDGSFSIRDIEET) form an interacts with and activates NS3 protease region. The segment at residues 1438–1458 (MITLLVKLALITVSGLYPLAI) is an intramembrane region (helical). Over 1459–2146 (PVTMTLWYMW…LNELPESLET (688 aa)) the chain is Cytoplasmic. The 178-residue stretch at 1475 to 1652 (SGALWDVPSP…ERTGEPDYEV (178 aa)) folds into the Peptidase S7 domain. Active-site charge relay system; for serine protease NS3 activity residues include His-1525, Asp-1549, and Ser-1609. In terms of domain architecture, Helicase ATP-binding spans 1654 to 1810 (EDIFRKKRLT…QSNSPIEDIE (157 aa)). Residues 1658–1661 (RKKR) form an important for RNA-binding region. 1667–1674 (LHPGAGKT) is an ATP binding site. The short motif at 1758–1761 (DEAH) is the DEAH box element. Positions 1820-1987 (TGFDWITDYQ…IIPTLFGPER (168 aa)) constitute a Helicase C-terminal domain. An N6-acetyllysine; by host modification is found at Lys-1862. The chain crosses the membrane as a helical span at residues 2147-2167 (LMLVALLGAMTAGIFLFFMQG). Topologically, residues 2168–2169 (KG) are lumenal. An intramembrane region (helical) is located at residues 2170–2190 (IGKLSMGLIAIAVASGLLWVA). A topological domain (lumenal) is located at residue Glu-2191. Residues 2192-2212 (IQPQWIAASIILEFFLMVLLI) traverse the membrane as a helical segment. Residues 2213 to 2225 (PEPEKQRTPQDNQ) are Cytoplasmic-facing. Residues 2226 to 2246 (LIYVILTILTIIGLIAANEMG) traverse the membrane as a helical segment. Over 2247–2270 (LIEKTKTDFGFYQVKTETTILDVD) the chain is Lumenal. An intramembrane region (helical) is located at residues 2271 to 2291 (LRPASAWTLYAVATTILTPML). Over 2292–2301 (RHTIENTSAN) the chain is Lumenal. N-linked (GlcNAc...) asparagine; by host glycans are attached at residues Asn-2297 and Asn-2301. The helical intramembrane region spans 2302 to 2322 (LSLAAIANQAAVLMGLGKGWP). At 2323–2343 (LHRMDLGVPLLAMGCYSQVNP) the chain is on the lumenal side. Residues 2344–2364 (TTLIASLVMLLVHYAIIGPGL) form a helical membrane-spanning segment. Residues 2365 to 2409 (QAKATREAQKRTAAGIMKNPTVDGITVIDLEPISYDPKFEKQLGQ) lie on the Cytoplasmic side of the membrane. The helical transmembrane segment at 2410-2430 (VMLLVLCAGQLLLMRTTWAFC) threads the bilayer. Residues 2431–2455 (EVLTLATGPVLTLWEGNPGRFWNTT) are Lumenal-facing. Asn-2453 is a glycosylation site (N-linked (GlcNAc...) asparagine; by host). The chain crosses the membrane as a helical span at residues 2456–2476 (IAVSTANIFRGSYLAGAGLAF). At 2477–3387 (SLIKNAQTPR…SAPFESEGVL (911 aa)) the chain is on the cytoplasmic side. The mRNA cap 0-1 NS5-type MT domain maps to 2489–2751 (TGTTGETLGE…DVDLGAGTRS (263 aa)). Ser-2543 is a binding site for S-adenosyl-L-methionine. Residue Ser-2543 is modified to Phosphoserine. Residue Lys-2548 is the For 2'-O-MTase activity of the active site. The SUMO-interacting motif signature appears at 2564–2567 (VVDL). The S-adenosyl-L-methionine site is built by Gly-2573, Trp-2574, Thr-2591, Lys-2592, Asp-2618, and Val-2619. Residue Asp-2633 is the For 2'-O-MTase activity of the active site. Residue Ile-2634 coordinates S-adenosyl-L-methionine. Catalysis depends on for 2'-O-MTase activity residues Lys-2668 and Glu-2704. Position 2706 (Tyr-2706) interacts with S-adenosyl-L-methionine. Residues Glu-2925, His-2929, Cys-2934, and Cys-2937 each coordinate Zn(2+). Residues 3016–3166 (LIYADDTAGW…PLDERFSTSL (151 aa)) enclose the RdRp catalytic domain. His-3200, Cys-3216, and Cys-3335 together coordinate Zn(2+).

It in the N-terminal section; belongs to the class I-like SAM-binding methyltransferase superfamily. mRNA cap 0-1 NS5-type methyltransferase family. As to quaternary structure, homodimer. Interacts (via N-terminus) with host EXOC1 (via C-terminus); this interaction results in EXOC1 degradation through the proteasome degradation pathway. In terms of assembly, forms heterodimers with envelope protein E in the endoplasmic reticulum and Golgi. Homodimer; in the endoplasmic reticulum and Golgi. Interacts with protein prM. Interacts with non-structural protein 1. As to quaternary structure, homodimer; Homohexamer when secreted. Interacts with envelope protein E. In terms of assembly, interacts (via N-terminus) with serine protease NS3. Forms a heterodimer with serine protease NS3. May form homooligomers. As to quaternary structure, forms a heterodimer with NS2B. Interacts with NS4B. Interacts with unphosphorylated RNA-directed RNA polymerase NS5; this interaction stimulates RNA-directed RNA polymerase NS5 guanylyltransferase activity. In terms of assembly, interacts with host MAVS; this interaction inhibits the synthesis of IFN-beta. Interacts with host AUP1; the interaction occurs in the presence of Dengue virus NS4B and induces lipophagy which facilitates production of virus progeny particles. Interacts with serine protease NS3. As to quaternary structure, homodimer. Interacts with host STAT2; this interaction inhibits the phosphorylation of the latter, and, when all viral proteins are present (polyprotein), targets STAT2 for degradation. Interacts with serine protease NS3. Interacts with host PAF1 complex; the interaction may prevent the recruitment of the PAF1 complex to interferon-responsive genes, and thus reduces the immune response. Post-translationally, specific enzymatic cleavages in vivo yield mature proteins. Cleavages in the lumen of endoplasmic reticulum are performed by host signal peptidase, whereas cleavages in the cytoplasmic side are performed by serine protease NS3. Signal cleavage at the 2K-4B site requires a prior NS3 protease-mediated cleavage at the 4A-2K site. In terms of processing, cleaved in post-Golgi vesicles by a host furin, releasing the mature small envelope protein M, and peptide pr. This cleavage is incomplete as up to 30% of viral particles still carry uncleaved prM. N-glycosylated. Post-translationally, N-glycosylated. The excreted form is glycosylated and this is required for efficient secretion of the protein from infected cells. In terms of processing, acetylated by host KAT5. Acetylation modulates NS3 RNA-binding and unwinding activities and plays an important positive role for viral replication. Sumoylation of RNA-directed RNA polymerase NS5 increases NS5 protein stability allowing proper viral RNA replication. Post-translationally, phosphorylated on serines residues. This phosphorylation may trigger NS5 nuclear localization.

The protein localises to the virion. Its subcellular location is the host nucleus. It localises to the host cytoplasm. The protein resides in the host perinuclear region. It is found in the secreted. The protein localises to the virion membrane. Its subcellular location is the host endoplasmic reticulum membrane. It localises to the host mitochondrion. The enzyme catalyses Selective hydrolysis of -Xaa-Xaa-|-Yaa- bonds in which each of the Xaa can be either Arg or Lys and Yaa can be either Ser or Ala.. It carries out the reaction RNA(n) + a ribonucleoside 5'-triphosphate = RNA(n+1) + diphosphate. The catalysed reaction is a ribonucleoside 5'-triphosphate + H2O = a ribonucleoside 5'-diphosphate + phosphate + H(+). It catalyses the reaction ATP + H2O = ADP + phosphate + H(+). The enzyme catalyses a 5'-end (5'-triphosphoguanosine)-ribonucleoside in mRNA + S-adenosyl-L-methionine = a 5'-end (N(7)-methyl 5'-triphosphoguanosine)-ribonucleoside in mRNA + S-adenosyl-L-homocysteine. It carries out the reaction a 5'-end (N(7)-methyl 5'-triphosphoguanosine)-ribonucleoside in mRNA + S-adenosyl-L-methionine = a 5'-end (N(7)-methyl 5'-triphosphoguanosine)-(2'-O-methyl-ribonucleoside) in mRNA + S-adenosyl-L-homocysteine + H(+). In terms of biological role, plays a role in virus budding by binding to the cell membrane and gathering the viral RNA into a nucleocapsid that forms the core of a mature virus particle. During virus entry, may induce genome penetration into the host cytoplasm after hemifusion induced by the surface proteins. Can migrate to the cell nucleus where it modulates host functions. Overcomes the anti-viral effects of host EXOC1 by sequestering and degrading the latter through the proteasome degradation pathway. Functionally, inhibits RNA silencing by interfering with host Dicer. Prevents premature fusion activity of envelope proteins in trans-Golgi by binding to envelope protein E at pH6.0. After virion release in extracellular space, gets dissociated from E dimers. Its function is as follows. Acts as a chaperone for envelope protein E during intracellular virion assembly by masking and inactivating envelope protein E fusion peptide. prM is the only viral peptide matured by host furin in the trans-Golgi network probably to avoid catastrophic activation of the viral fusion activity in acidic Golgi compartment prior to virion release. prM-E cleavage is inefficient, and many virions are only partially matured. These uncleaved prM would play a role in immune evasion. In terms of biological role, may play a role in virus budding. Exerts cytotoxic effects by activating a mitochondrial apoptotic pathway through M ectodomain. May display a viroporin activity. Functionally, binds to host cell surface receptor and mediates fusion between viral and cellular membranes. Envelope protein is synthesized in the endoplasmic reticulum in the form of heterodimer with protein prM. They play a role in virion budding in the ER, and the newly formed immature particle is covered with 60 spikes composed of heterodimer between precursor prM and envelope protein E. The virion is transported to the Golgi apparatus where the low pH causes dissociation of PrM-E heterodimers and formation of E homodimers. prM-E cleavage is inefficient, and many virions are only partially matured. These uncleaved prM would play a role in immune evasion. Involved in immune evasion, pathogenesis and viral replication. Once cleaved off the polyprotein, is targeted to three destinations: the viral replication cycle, the plasma membrane and the extracellular compartment. Essential for viral replication. Required for formation of the replication complex and recruitment of other non-structural proteins to the ER-derived membrane structures. Excreted as a hexameric lipoparticle that plays a role against host immune response. Antagonizing the complement function. Binds to the host macrophages and dendritic cells. Inhibits signal transduction originating from Toll-like receptor 3 (TLR3). Its function is as follows. Disrupts the host endothelial glycocalyx layer of host pulmonary microvascular endothelial cells, inducing degradation of sialic acid and shedding of heparan sulfate proteoglycans. NS1 induces expression of sialidases, heparanase, and activates cathepsin L, which activates heparanase via enzymatic cleavage. These effects are probably linked to the endothelial hyperpermeability observed in severe dengue disease. In terms of biological role, component of the viral RNA replication complex that functions in virion assembly and antagonizes the host immune response. Functionally, required cofactor for the serine protease function of NS3. May have membrane-destabilizing activity and form viroporins. Displays three enzymatic activities: serine protease, NTPase and RNA helicase. NS3 serine protease, in association with NS2B, performs its autocleavage and cleaves the polyprotein at dibasic sites in the cytoplasm: C-prM, NS2A-NS2B, NS2B-NS3, NS3-NS4A, NS4A-2K and NS4B-NS5. NS3 RNA helicase binds RNA and unwinds dsRNA in the 3' to 5' direction. Its function is as follows. Regulates the ATPase activity of the NS3 helicase activity. NS4A allows NS3 helicase to conserve energy during unwinding. Plays a role in the inhibition of the host innate immune response. Interacts with host MAVS and thereby prevents the interaction between RIGI and MAVS. In turn, IFN-beta production is impaired. Interacts with host AUP1 which mediates induction of lipophagy in host cells and facilitates production of virus progeny particles. In terms of biological role, functions as a signal peptide for NS4B and is required for the interferon antagonism activity of the latter. Functionally, induces the formation of ER-derived membrane vesicles where the viral replication takes place. Inhibits interferon (IFN)-induced host STAT1 phosphorylation and nuclear translocation, thereby preventing the establishment of cellular antiviral state by blocking the IFN-alpha/beta pathway. Replicates the viral (+) and (-) RNA genome, and performs the capping of genomes in the cytoplasm. NS5 methylates viral RNA cap at guanine N-7 and ribose 2'-O positions. Besides its role in RNA genome replication, also prevents the establishment of cellular antiviral state by blocking the interferon-alpha/beta (IFN-alpha/beta) signaling pathway. Inhibits host TYK2 and STAT2 phosphorylation, thereby preventing activation of JAK-STAT signaling pathway. May reduce immune responses by preventing the recruitment of the host PAF1 complex to interferon-responsive genes. This chain is Genome polyprotein, found in Aedes aegypti (Yellowfever mosquito).